The following is a 415-amino-acid chain: Imidazolonepropionase (415 aa).

Residues His-75 and His-77 each coordinate Fe(3+). Zn(2+) contacts are provided by His-75 and His-77. 4-imidazolone-5-propanoate is bound by residues Arg-84, Tyr-147, and His-180. Residue Tyr-147 coordinates N-formimidoyl-L-glutamate. His-245 contacts Fe(3+). His-245 serves as a coordination point for Zn(2+). Gln-248 is a 4-imidazolone-5-propanoate binding site. Asp-320 provides a ligand contact to Fe(3+). A Zn(2+)-binding site is contributed by Asp-320. N-formimidoyl-L-glutamate contacts are provided by Asn-322 and Gly-324. 4-imidazolone-5-propanoate is bound at residue Thr-325.

The protein belongs to the metallo-dependent hydrolases superfamily. HutI family. The cofactor is Zn(2+). Fe(3+) is required as a cofactor.

Its subcellular location is the cytoplasm. The catalysed reaction is 4-imidazolone-5-propanoate + H2O = N-formimidoyl-L-glutamate. It participates in amino-acid degradation; L-histidine degradation into L-glutamate; N-formimidoyl-L-glutamate from L-histidine: step 3/3. Its function is as follows. Catalyzes the hydrolytic cleavage of the carbon-nitrogen bond in imidazolone-5-propanoate to yield N-formimidoyl-L-glutamate. It is the third step in the universal histidine degradation pathway. In Photorhabdus laumondii subsp. laumondii (strain DSM 15139 / CIP 105565 / TT01) (Photorhabdus luminescens subsp. laumondii), this protein is Imidazolonepropionase.